A 357-amino-acid chain; its full sequence is Peptide chain release factor 1 (357 aa).

Residue Q232 is modified to N5-methylglutamine. Over residues 282–291 (KQRAEQEAAR) the composition is skewed to basic and acidic residues. The tract at residues 282-302 (KQRAEQEAARRSQVGTGDRSE) is disordered.

It belongs to the prokaryotic/mitochondrial release factor family. Methylated by PrmC. Methylation increases the termination efficiency of RF1.

Its subcellular location is the cytoplasm. Functionally, peptide chain release factor 1 directs the termination of translation in response to the peptide chain termination codons UAG and UAA. This is Peptide chain release factor 1 from Solidesulfovibrio magneticus (strain ATCC 700980 / DSM 13731 / RS-1) (Desulfovibrio magneticus).